A 265-amino-acid chain; its full sequence is Hydroxyethylthiazole kinase (265 aa).

Methionine 41 contributes to the substrate binding site. The ATP site is built by arginine 117 and serine 163. A substrate-binding site is contributed by glycine 190.

This sequence belongs to the Thz kinase family. Requires Mg(2+) as cofactor.

The enzyme catalyses 5-(2-hydroxyethyl)-4-methylthiazole + ATP = 4-methyl-5-(2-phosphooxyethyl)-thiazole + ADP + H(+). Its pathway is cofactor biosynthesis; thiamine diphosphate biosynthesis; 4-methyl-5-(2-phosphoethyl)-thiazole from 5-(2-hydroxyethyl)-4-methylthiazole: step 1/1. Catalyzes the phosphorylation of the hydroxyl group of 4-methyl-5-beta-hydroxyethylthiazole (THZ). In Pediococcus pentosaceus (strain ATCC 25745 / CCUG 21536 / LMG 10740 / 183-1w), this protein is Hydroxyethylthiazole kinase.